Here is a 54-residue protein sequence, read N- to C-terminus: Large ribosomal subunit protein bL32 (54 aa).

This sequence belongs to the bacterial ribosomal protein bL32 family.

This is Large ribosomal subunit protein bL32 from Buchnera aphidicola subsp. Baizongia pistaciae (strain Bp).